The following is a 168-amino-acid chain: Probable chorismate pyruvate-lyase (168 aa).

R75, I114, and E155 together coordinate substrate.

The protein belongs to the UbiC family.

The protein resides in the cytoplasm. It catalyses the reaction chorismate = 4-hydroxybenzoate + pyruvate. It participates in cofactor biosynthesis; ubiquinone biosynthesis. Functionally, removes the pyruvyl group from chorismate, with concomitant aromatization of the ring, to provide 4-hydroxybenzoate (4HB) for the ubiquinone pathway. The chain is Probable chorismate pyruvate-lyase from Psychrobacter cryohalolentis (strain ATCC BAA-1226 / DSM 17306 / VKM B-2378 / K5).